The chain runs to 142 residues: Peptide methionine sulfoxide reductase MsrB (142 aa).

In terms of domain architecture, MsrB spans 2–125 (IKKDKNELNE…NSAAIQFIPY (124 aa)). Catalysis depends on cysteine 114, which acts as the Nucleophile.

Belongs to the MsrB Met sulfoxide reductase family.

The catalysed reaction is L-methionyl-[protein] + [thioredoxin]-disulfide + H2O = L-methionyl-(R)-S-oxide-[protein] + [thioredoxin]-dithiol. The protein is Peptide methionine sulfoxide reductase MsrB of Staphylococcus haemolyticus (strain JCSC1435).